The sequence spans 385 residues: Cytochrome b (385 aa).

Transmembrane regions (helical) follow at residues 32–52 (FGSL…TLAM), 76–98 (WLVR…LHIG), 113–133 (TWAI…LGYV), and 179–199 (FFAL…MHLI). Heme b contacts are provided by His82 and His96. Heme b-binding residues include His183 and His197. His202 contributes to the a ubiquinone binding site. Transmembrane regions (helical) follow at residues 226–246 (FVFK…IFVF), 290–310 (LLGV…PITD), 322–342 (LSKV…QIGA), and 349–369 (FIEF…VIVP).

This sequence belongs to the cytochrome b family. Fungal cytochrome b-c1 complex contains 10 subunits; 3 respiratory subunits, 2 core proteins and 5 low-molecular weight proteins. Cytochrome b-c1 complex is a homodimer. Heme b is required as a cofactor.

Its subcellular location is the mitochondrion inner membrane. Functionally, component of the ubiquinol-cytochrome c reductase complex (complex III or cytochrome b-c1 complex) that is part of the mitochondrial respiratory chain. The b-c1 complex mediates electron transfer from ubiquinol to cytochrome c. Contributes to the generation of a proton gradient across the mitochondrial membrane that is then used for ATP synthesis. The protein is Cytochrome b (cob) of Aspergillus terreus (strain NIH 2624 / FGSC A1156).